The following is an 834-amino-acid chain: Glycerol-3-phosphate acyltransferase (834 aa).

Residues 309 to 314 (CHRSHI) carry the HXXXXD motif motif.

This sequence belongs to the GPAT/DAPAT family.

It localises to the cell inner membrane. It catalyses the reaction sn-glycerol 3-phosphate + an acyl-CoA = a 1-acyl-sn-glycero-3-phosphate + CoA. It functions in the pathway phospholipid metabolism; CDP-diacylglycerol biosynthesis; CDP-diacylglycerol from sn-glycerol 3-phosphate: step 1/3. This Pseudomonas fluorescens (strain ATCC BAA-477 / NRRL B-23932 / Pf-5) protein is Glycerol-3-phosphate acyltransferase.